The following is a 190-amino-acid chain: Myophilin (190 aa).

A disordered region spans residues 1 to 23; sequence MSNVPPPSGLSYQVKKKLEGKRD. Positions 24-130 constitute a Calponin-homology (CH) domain; that stretch reads KDQENEALEW…RTLFALGRTC (107 aa). Residues 165–189 form a Calponin-like repeat; that stretch reads VSLQYGSNKGASQAGINMGKQRMIM.

The protein belongs to the calponin family. In terms of tissue distribution, muscle specific.

The sequence is that of Myophilin from Echinococcus granulosus (Hydatid tapeworm).